The following is a 352-amino-acid chain: Plant intracellular Ras-group-related LRR protein 1 (352 aa).

Positions 1-25 are disordered; that stretch reads MREMGEKRRRGHLNPAGFAGGLHDH. 10 LRR repeats span residues 29-52, 53-75, 77-99, 100-122, 124-146, 147-169, 171-192, 195-217, 218-241, and 243-263; these read KNEEHKLDMSGMSMDALPHLTMSL, GQVTILDLSNNNLESIPESIIAR, LNVVVLDVRSNQLKSLPNSIGCL, SKLKVLNVSGNLLESLPNTIEEC, ALEELHANFNELTKLPDTLGFEL, HSLRKLSVNSNKLAQLPSSTSHM, ALRALDARLNCLRALPDGLENL, LEALNVSQNFQFLRELPYAVGLL, ASLRELDVSYNSIAALPDSMGCLT, and LARFSAVGNPLVSPPMDVVEQ. The GVYW; degenerate motif lies at 264 to 271; sequence GLDAMRAY.

This sequence belongs to the SHOC2 family. As to expression, widely expressed but at a lower level in seedlings and stems.

Leucine-rich repeat protein that likely mediates protein interactions, possibly in the context of signal transduction. The polypeptide is Plant intracellular Ras-group-related LRR protein 1 (IRL1) (Oryza sativa subsp. japonica (Rice)).